A 249-amino-acid polypeptide reads, in one-letter code: 5'-nucleotidase SurE (249 aa).

A divalent metal cation-binding residues include Asp9, Asp10, Ser40, and Asn92.

This sequence belongs to the SurE nucleotidase family. The cofactor is a divalent metal cation.

It is found in the cytoplasm. It catalyses the reaction a ribonucleoside 5'-phosphate + H2O = a ribonucleoside + phosphate. In terms of biological role, nucleotidase that shows phosphatase activity on nucleoside 5'-monophosphates. The sequence is that of 5'-nucleotidase SurE from Shewanella baltica (strain OS223).